The chain runs to 362 residues: Trans-enoyl reductase phm4 (362 aa).

An NADP(+)-binding site is contributed by 50–53 (VDAK). 136-143 (TCFMTCGL) is a binding site for substrate. Residues 171 to 174 (ATAT), 194 to 197 (SPHS), Tyr-212, and 259 to 260 (LD) contribute to the NADP(+) site. 280–284 (GPIML) provides a ligand contact to substrate. NADP(+) is bound at residue 349–350 (VN).

Belongs to the zinc-containing alcohol dehydrogenase family. Monomer.

It participates in secondary metabolite biosynthesis. Functionally, trans-enoyl reductase; part of the gene cluster that mediates the biosynthesis of the trans-fused decalin-containing tetramic acid phomasetin, the stereochemical opposite of the HIV-1 integrase inhibitor equisetin. The PKS module of phm1 together with the enoylreductase phm4 catalyze the formation of the polyketide unit which is then conjugated to L-serine by the condensation domain of the phm1 NRPS module. Activity of the Dieckmann cyclase domain (RED) of phm1 results in release of the Dieckmann product intermediate. The Diels-Alderase phm7 then uses the Dieckmann product of phm1 as substrate and catalyzes the Diels-Alder cycloaddition to form the decalin ring of N-desmethylphomasetin. N-desmethylphomasetin is further methylated to phomasetin by the methyltransferase phm5. The chain is Trans-enoyl reductase phm4 from Pyrenochaetopsis sp.